The following is an 89-amino-acid chain: uncharacterized protein (89 aa).

This sequence to B.licheniformis xpaF1 and to B.subtilis XhlA.

This is an uncharacterized protein from Bacillus licheniformis.